Reading from the N-terminus, the 348-residue chain is Protein lifeguard 1 (348 aa).

The segment at 1 to 118 (MSHEKSFLVS…GNYQEEGPPS (118 aa)) is disordered. Pro residues predominate over residues 14–41 (YPPPNPGYPVGPQAPMPPYVQPPYPGAP). Residues 42-57 (YPQAAFQPSPYGQPGY) are compositionally biased toward low complexity. Pro residues predominate over residues 82 to 101 (GPYPQSPFPPNPYGQPPPFQ). Helical transmembrane passes span 142–162 (VFLV…IFTF), 174–194 (VWTY…LSCC), 205–225 (LVAL…IASF), 230–250 (AVIM…IFSM), 260–280 (MGVL…CIFI), 284–304 (ILEI…LAVD), and 323–343 (FAAL…LTII).

It belongs to the BI1 family. LFG subfamily.

Its subcellular location is the membrane. In terms of biological role, potential apoptotic regulator. The polypeptide is Protein lifeguard 1 (Grina) (Rattus norvegicus (Rat)).